A 185-amino-acid chain; its full sequence is TATA-box-binding protein 3 (185 aa).

2 tandem repeats follow at residues isoleucine 7–leucine 84 and valine 100–phenylalanine 178.

It belongs to the TBP family.

General factor that plays a role in the activation of archaeal genes transcribed by RNA polymerase. Binds specifically to the TATA box promoter element which lies close to the position of transcription initiation. This Methanosarcina mazei (strain ATCC BAA-159 / DSM 3647 / Goe1 / Go1 / JCM 11833 / OCM 88) (Methanosarcina frisia) protein is TATA-box-binding protein 3.